The chain runs to 498 residues: Ganglioside-induced differentiation-associated protein 2 (498 aa).

The Macro domain maps to R43–F223. The disordered stretch occupies residues P248–G275. Positions R253–A263 are enriched in basic and acidic residues. Residues E265–G275 are compositionally biased toward acidic residues. A Phosphoserine modification is found at S281. The CRAL-TRIO domain maps to D334 to A482.

This sequence belongs to the GDAP2 family. In terms of tissue distribution, expressed at high levels in brain and testis, and at low levels in liver and kidney.

This Mus musculus (Mouse) protein is Ganglioside-induced differentiation-associated protein 2 (Gdap2).